We begin with the raw amino-acid sequence, 144 residues long: Cell division protein SepF (144 aa).

Belongs to the SepF family. Homodimer. Interacts with FtsZ.

The protein resides in the cytoplasm. Its function is as follows. Cell division protein that is part of the divisome complex and is recruited early to the Z-ring. Probably stimulates Z-ring formation, perhaps through the cross-linking of FtsZ protofilaments. Its function overlaps with FtsA. The chain is Cell division protein SepF from Oceanobacillus iheyensis (strain DSM 14371 / CIP 107618 / JCM 11309 / KCTC 3954 / HTE831).